Consider the following 299-residue polypeptide: Probable lipid kinase YegS (299 aa).

In terms of domain architecture, DAGKc spans 2 to 133 (ANFPASLLIL…IDMARVNDKT (132 aa)). ATP contacts are provided by residues threonine 40, 66–72 (GDGTINE), and threonine 95. 3 residues coordinate Mg(2+): leucine 215, aspartate 218, and leucine 220. Glutamate 271 (proton acceptor) is an active-site residue.

The protein belongs to the diacylglycerol/lipid kinase family. YegS lipid kinase subfamily. Mg(2+) is required as a cofactor. It depends on Ca(2+) as a cofactor.

The protein resides in the cytoplasm. Functionally, probably phosphorylates lipids; the in vivo substrate is unknown. This is Probable lipid kinase YegS from Salmonella agona (strain SL483).